The sequence spans 237 residues: Large ribosomal subunit protein uL1 (237 aa).

The protein belongs to the universal ribosomal protein uL1 family. As to quaternary structure, part of the 50S ribosomal subunit.

In terms of biological role, binds directly to 23S rRNA. The L1 stalk is quite mobile in the ribosome, and is involved in E site tRNA release. Protein L1 is also a translational repressor protein, it controls the translation of the L11 operon by binding to its mRNA. This Corynebacterium kroppenstedtii (strain DSM 44385 / JCM 11950 / CIP 105744 / CCUG 35717) protein is Large ribosomal subunit protein uL1.